The chain runs to 602 residues: Sodium- and chloride-dependent GABA transporter 2 (602 aa).

The Cytoplasmic portion of the chain corresponds to 1 to 40 (MDSRVSGTTSNGETKPVCPGLEKAAEDGALQREQWSNKME). The next 3 membrane-spanning stretches (helical) occupy residues 41–61 (FLLS…FPYL), 68–88 (GAFF…VFLL), and 121–141 (IVTL…FYLF). Topologically, residues 142-206 (SSFTIDLPWG…GIQHLGALRW (65 aa)) are extracellular. The cysteines at positions 153 and 162 are disulfide-linked. N-linked (GlcNAc...) asparagine glycosylation is found at Asn-169 and Asn-173. The next 2 membrane-spanning stretches (helical) occupy residues 207–227 (ELAL…WKGV) and 233–253 (VVYF…IRGV). A glycan (N-linked (GlcNAc...) asparagine) is linked at Asn-269. The next 7 helical transmembrane spans lie at 282–302 (AGTQ…ALGS), 319–339 (FLNS…LGFM), 366–386 (VVML…VVLL), 418–438 (VLIL…LTEG), 453–473 (GMCL…AYGA), 490–510 (PLIK…TFLF), and 528–548 (WWGD…IPAW). Topologically, residues 549–602 (SCYKLSTLKGSFRERVRQLLCPAKDLPQGHREGPSAPATPRTSLLILTELEPHH) are cytoplasmic. Position 587 is a phosphothreonine (Thr-587). Residue Ser-591 is modified to Phosphoserine.

Belongs to the sodium:neurotransmitter symporter (SNF) (TC 2.A.22) family. SLC6A13 subfamily.

The protein resides in the cell membrane. The protein localises to the basolateral cell membrane. The enzyme catalyses 4-aminobutanoate(out) + chloride(out) + 2 Na(+)(out) = 4-aminobutanoate(in) + chloride(in) + 2 Na(+)(in). It catalyses the reaction taurine(out) + chloride(out) + 2 Na(+)(out) = taurine(in) + chloride(in) + 2 Na(+)(in). The catalysed reaction is beta-alanine(out) + chloride(out) + 2 Na(+)(out) = beta-alanine(in) + chloride(in) + 2 Na(+)(in). It carries out the reaction hypotaurine(out) + chloride(out) + 2 Na(+)(out) = hypotaurine(in) + chloride(in) + 2 Na(+)(in). In terms of biological role, mediates sodium- and chloride-dependent transport of gamma-aminobutyric acid (GABA). Can also mediate transport of beta-alanine, taurine and hypotaurine. This is Sodium- and chloride-dependent GABA transporter 2 (SLC6A13) from Bos taurus (Bovine).